We begin with the raw amino-acid sequence, 352 residues long: Mitochondrial adenine nucleotide transporter ADNT1 (352 aa).

3 Solcar repeats span residues 36–123 (KSIC…ASNG), 139–227 (LTPL…LKDW), and 242–343 (LTVV…VKDV). 6 helical membrane passes run 41 to 61 (SLFAGGVAGGVSRTAVAPLER), 100 to 120 (GTNCARIVPNSAVKFFSYEQA), 145 to 162 (LGAGATAGIIAMSATYPM), 202 to 221 (GWLPSVIGVVPYVGLNFSVY), 242 to 263 (LTVVTRLTCGAIAGTVGQTIAY), and 324 to 340 (VKVVPSIAIAFVTYEMV).

This sequence belongs to the mitochondrial carrier (TC 2.A.29) family. Expressed in seedling radicles and roots, vasculature of cotyledons, leaf primordia, leaves and sepals.

It is found in the mitochondrion inner membrane. Inhibited by pyridoxal 5-phosphate, bathophenanthroline, mersalyl, p-hydroxymercuribenzoate and tannic acid. Mitochondrial adenylate carrier that catalyzes specifically the transport of ATP, ADP and AMP by a counter-exchange mechanism across the inner mitochondrial membrane. Substrate preference in reconstituted proteoliposomes is ATP &gt; AMP &gt; ADP. May play a role in oxidative phosphorylation and be important for the provision of energy required to support growth in heterotrophic tissues. This Arabidopsis thaliana (Mouse-ear cress) protein is Mitochondrial adenine nucleotide transporter ADNT1 (ADNT1).